The following is a 95-amino-acid chain: Integration host factor subunit beta (95 aa).

Belongs to the bacterial histone-like protein family. In terms of assembly, heterodimer of an alpha and a beta chain.

Its function is as follows. This protein is one of the two subunits of integration host factor, a specific DNA-binding protein that functions in genetic recombination as well as in transcriptional and translational control. This chain is Integration host factor subunit beta, found in Jannaschia sp. (strain CCS1).